We begin with the raw amino-acid sequence, 343 residues long: N-acetyl-gamma-glutamyl-phosphate reductase (343 aa).

Cys-147 is an active-site residue.

This sequence belongs to the NAGSA dehydrogenase family. Type 1 subfamily.

The protein localises to the cytoplasm. The enzyme catalyses N-acetyl-L-glutamate 5-semialdehyde + phosphate + NADP(+) = N-acetyl-L-glutamyl 5-phosphate + NADPH + H(+). It functions in the pathway amino-acid biosynthesis; L-arginine biosynthesis; N(2)-acetyl-L-ornithine from L-glutamate: step 3/4. In terms of biological role, catalyzes the NADPH-dependent reduction of N-acetyl-5-glutamyl phosphate to yield N-acetyl-L-glutamate 5-semialdehyde. The polypeptide is N-acetyl-gamma-glutamyl-phosphate reductase (Staphylococcus aureus (strain USA300)).